We begin with the raw amino-acid sequence, 544 residues long: Chaperonin GroEL 1 (544 aa).

ATP-binding positions include 30–33 (TLGP), 87–91 (DGTTT), Gly415, 480–482 (NAA), and Asp496.

Belongs to the chaperonin (HSP60) family. In terms of assembly, forms a cylinder of 14 subunits composed of two heptameric rings stacked back-to-back. Interacts with the co-chaperonin GroES.

Its subcellular location is the cytoplasm. The enzyme catalyses ATP + H2O + a folded polypeptide = ADP + phosphate + an unfolded polypeptide.. Functionally, together with its co-chaperonin GroES, plays an essential role in assisting protein folding. The GroEL-GroES system forms a nano-cage that allows encapsulation of the non-native substrate proteins and provides a physical environment optimized to promote and accelerate protein folding. This is Chaperonin GroEL 1 from Polaromonas naphthalenivorans (strain CJ2).